Reading from the N-terminus, the 183-residue chain is Lipid droplet coating protein Cap20 (183 aa).

This sequence belongs to the perilipin family.

The protein localises to the lipid droplet. Lipid droplet coating protein that regulates lipid metabolism, appressorial turgor pressure, and virulence. Appressorial turgor pressure is important for the mechanical penetration of the host cuticle during infection. In Colletotrichum gloeosporioides (Anthracnose fungus), this protein is Lipid droplet coating protein Cap20 (Cap20).